The sequence spans 201 residues: Pyridoxine/pyridoxamine 5'-phosphate oxidase (201 aa).

FMN-binding positions include 45 to 50, 65 to 66, Arg-71, Lys-72, and Gln-94; these read RMVLLK and YT. Substrate is bound at residue Lys-50. Substrate is bound by residues Tyr-112, Arg-116, and Ser-120. FMN is bound by residues 129-130 and Trp-174; that span reads QS. 180-182 is a substrate binding site; it reads RLH. Arg-184 lines the FMN pocket.

The protein belongs to the pyridoxamine 5'-phosphate oxidase family. Homodimer. It depends on FMN as a cofactor.

The enzyme catalyses pyridoxamine 5'-phosphate + O2 + H2O = pyridoxal 5'-phosphate + H2O2 + NH4(+). It carries out the reaction pyridoxine 5'-phosphate + O2 = pyridoxal 5'-phosphate + H2O2. It functions in the pathway cofactor metabolism; pyridoxal 5'-phosphate salvage; pyridoxal 5'-phosphate from pyridoxamine 5'-phosphate: step 1/1. It participates in cofactor metabolism; pyridoxal 5'-phosphate salvage; pyridoxal 5'-phosphate from pyridoxine 5'-phosphate: step 1/1. In terms of biological role, catalyzes the oxidation of either pyridoxine 5'-phosphate (PNP) or pyridoxamine 5'-phosphate (PMP) into pyridoxal 5'-phosphate (PLP). In Rhodospirillum rubrum (strain ATCC 11170 / ATH 1.1.1 / DSM 467 / LMG 4362 / NCIMB 8255 / S1), this protein is Pyridoxine/pyridoxamine 5'-phosphate oxidase.